The chain runs to 179 residues: Ribulose bisphosphate carboxylase small subunit, chloroplastic 1/4 (179 aa).

Residues 1 to 58 (MAASSTMLSSVATAACAAPAQASMVAPFVGLKSTSAFPVTQKPATGLSTLPSNGGRVQ) constitute a chloroplast transit peptide.

Belongs to the RuBisCO small chain family. As to quaternary structure, heterohexadecamer of 8 large and 8 small subunits.

Its subcellular location is the plastid. The protein localises to the chloroplast. RuBisCO catalyzes two reactions: the carboxylation of D-ribulose 1,5-bisphosphate, the primary event in carbon dioxide fixation, as well as the oxidative fragmentation of the pentose substrate. Both reactions occur simultaneously and in competition at the same active site. Although the small subunit is not catalytic it is essential for maximal activity. The polypeptide is Ribulose bisphosphate carboxylase small subunit, chloroplastic 1/4 (RBCS1) (Fritillaria agrestis (Stinkbells)).